Reading from the N-terminus, the 268-residue chain is Hydroxyethylthiazole kinase (268 aa).

Residue M47 coordinates substrate. ATP contacts are provided by K123 and T170. Substrate is bound at residue A196.

Belongs to the Thz kinase family. The cofactor is Mg(2+).

It carries out the reaction 5-(2-hydroxyethyl)-4-methylthiazole + ATP = 4-methyl-5-(2-phosphooxyethyl)-thiazole + ADP + H(+). The protein operates within cofactor biosynthesis; thiamine diphosphate biosynthesis; 4-methyl-5-(2-phosphoethyl)-thiazole from 5-(2-hydroxyethyl)-4-methylthiazole: step 1/1. In terms of biological role, catalyzes the phosphorylation of the hydroxyl group of 4-methyl-5-beta-hydroxyethylthiazole (THZ). In Finegoldia magna (strain ATCC 29328 / DSM 20472 / WAL 2508) (Peptostreptococcus magnus), this protein is Hydroxyethylthiazole kinase.